The chain runs to 66 residues: Large ribosomal subunit protein bL35 (66 aa).

Over residues 1-46 (MPKMKTHRASAKRFKRTGNGGLKRHHAFTGHRFHGKTKKQRRHLRK) the composition is skewed to basic residues. The disordered stretch occupies residues 1–50 (MPKMKTHRASAKRFKRTGNGGLKRHHAFTGHRFHGKTKKQRRHLRKAAMV).

The protein belongs to the bacterial ribosomal protein bL35 family.

The protein is Large ribosomal subunit protein bL35 of Lactobacillus delbrueckii subsp. bulgaricus (strain ATCC 11842 / DSM 20081 / BCRC 10696 / JCM 1002 / NBRC 13953 / NCIMB 11778 / NCTC 12712 / WDCM 00102 / Lb 14).